We begin with the raw amino-acid sequence, 548 residues long: Chaperonin GroEL (548 aa).

Residues T30 to P33, K51, D87 to T91, G415, N479 to A481, and D495 contribute to the ATP site.

The protein belongs to the chaperonin (HSP60) family. In terms of assembly, forms a cylinder of 14 subunits composed of two heptameric rings stacked back-to-back. Interacts with the co-chaperonin GroES.

The protein localises to the cytoplasm. The catalysed reaction is ATP + H2O + a folded polypeptide = ADP + phosphate + an unfolded polypeptide.. Functionally, together with its co-chaperonin GroES, plays an essential role in assisting protein folding. The GroEL-GroES system forms a nano-cage that allows encapsulation of the non-native substrate proteins and provides a physical environment optimized to promote and accelerate protein folding. The protein is Chaperonin GroEL of Lawsonia intracellularis (strain PHE/MN1-00).